The chain runs to 408 residues: LL-diaminopimelate aminotransferase (408 aa).

2 residues coordinate substrate: tyrosine 15 and glycine 42. Pyridoxal 5'-phosphate contacts are provided by residues tyrosine 72, 108–109 (SK), tyrosine 132, asparagine 187, tyrosine 218, and 246–248 (SFS). The substrate site is built by lysine 109, tyrosine 132, and asparagine 187. Lysine 249 carries the post-translational modification N6-(pyridoxal phosphate)lysine. Residues arginine 257 and asparagine 292 each coordinate pyridoxal 5'-phosphate. Substrate-binding residues include asparagine 292 and arginine 388.

The protein belongs to the class-I pyridoxal-phosphate-dependent aminotransferase family. LL-diaminopimelate aminotransferase subfamily. In terms of assembly, homodimer. The cofactor is pyridoxal 5'-phosphate.

It carries out the reaction (2S,6S)-2,6-diaminopimelate + 2-oxoglutarate = (S)-2,3,4,5-tetrahydrodipicolinate + L-glutamate + H2O + H(+). It participates in amino-acid biosynthesis; L-lysine biosynthesis via DAP pathway; LL-2,6-diaminopimelate from (S)-tetrahydrodipicolinate (aminotransferase route): step 1/1. Its function is as follows. Involved in the synthesis of meso-diaminopimelate (m-DAP or DL-DAP), required for both lysine and peptidoglycan biosynthesis. Catalyzes the direct conversion of tetrahydrodipicolinate to LL-diaminopimelate. The polypeptide is LL-diaminopimelate aminotransferase (Leptospira borgpetersenii serovar Hardjo-bovis (strain JB197)).